The primary structure comprises 372 residues: Lipid-A-disaccharide synthase (372 aa).

The protein belongs to the LpxB family.

The enzyme catalyses a lipid X + a UDP-2-N,3-O-bis[(3R)-3-hydroxyacyl]-alpha-D-glucosamine = a lipid A disaccharide + UDP + H(+). Its pathway is bacterial outer membrane biogenesis; LPS lipid A biosynthesis. In terms of biological role, condensation of UDP-2,3-diacylglucosamine and 2,3-diacylglucosamine-1-phosphate to form lipid A disaccharide, a precursor of lipid A, a phosphorylated glycolipid that anchors the lipopolysaccharide to the outer membrane of the cell. This is Lipid-A-disaccharide synthase from Thiobacillus denitrificans (strain ATCC 25259 / T1).